We begin with the raw amino-acid sequence, 264 residues long: tRNA pseudouridine synthase A (264 aa).

The active-site Nucleophile is the Asp51. Substrate is bound at residue Tyr109.

The protein belongs to the tRNA pseudouridine synthase TruA family. In terms of assembly, homodimer.

It catalyses the reaction uridine(38/39/40) in tRNA = pseudouridine(38/39/40) in tRNA. Functionally, formation of pseudouridine at positions 38, 39 and 40 in the anticodon stem and loop of transfer RNAs. The polypeptide is tRNA pseudouridine synthase A (Polaromonas sp. (strain JS666 / ATCC BAA-500)).